Reading from the N-terminus, the 283-residue chain is Polyamine aminopropyltransferase (283 aa).

Residues 5–238 (PTWIDEYHKG…GIWSWTFASD (234 aa)) form the PABS domain. Residue Gln-32 coordinates S-methyl-5'-thioadenosine. 2 residues coordinate spermidine: His-63 and Asp-87. S-methyl-5'-thioadenosine-binding positions include Glu-107 and 139 to 140 (DG). The active-site Proton acceptor is Asp-158. 158 to 161 (DCSD) serves as a coordination point for spermidine.

It belongs to the spermidine/spermine synthase family. In terms of assembly, homodimer or homotetramer.

It localises to the cytoplasm. The enzyme catalyses S-adenosyl 3-(methylsulfanyl)propylamine + putrescine = S-methyl-5'-thioadenosine + spermidine + H(+). It participates in amine and polyamine biosynthesis; spermidine biosynthesis; spermidine from putrescine: step 1/1. Catalyzes the irreversible transfer of a propylamine group from the amino donor S-adenosylmethioninamine (decarboxy-AdoMet) to putrescine (1,4-diaminobutane) to yield spermidine. The protein is Polyamine aminopropyltransferase of Prochlorococcus marinus subsp. pastoris (strain CCMP1986 / NIES-2087 / MED4).